The chain runs to 439 residues: tRNA modification GTPase MnmE (439 aa).

(6S)-5-formyl-5,6,7,8-tetrahydrofolate contacts are provided by Arg20, Glu78, and Lys116. In terms of domain architecture, TrmE-type G spans 211-364 (GIYVAILGEP…LLSAIQKKVE (154 aa)). GTP-binding positions include 221–226 (NSGKST), 240–246 (SEYAGTT), and 265–268 (DTAG). Positions 225 and 246 each coordinate Mg(2+). Lys439 contacts (6S)-5-formyl-5,6,7,8-tetrahydrofolate.

Belongs to the TRAFAC class TrmE-Era-EngA-EngB-Septin-like GTPase superfamily. TrmE GTPase family. As to quaternary structure, homodimer. Heterotetramer of two MnmE and two MnmG subunits. Requires K(+) as cofactor.

It is found in the cytoplasm. Its function is as follows. Exhibits a very high intrinsic GTPase hydrolysis rate. Involved in the addition of a carboxymethylaminomethyl (cmnm) group at the wobble position (U34) of certain tRNAs, forming tRNA-cmnm(5)s(2)U34. The sequence is that of tRNA modification GTPase MnmE from Ehrlichia ruminantium (strain Welgevonden).